The chain runs to 94 residues: Large ribosomal subunit protein bL25 (94 aa).

This sequence belongs to the bacterial ribosomal protein bL25 family. As to quaternary structure, part of the 50S ribosomal subunit; part of the 5S rRNA/L5/L18/L25 subcomplex. Contacts the 5S rRNA. Binds to the 5S rRNA independently of L5 and L18.

Its function is as follows. This is one of the proteins that binds to the 5S RNA in the ribosome where it forms part of the central protuberance. The polypeptide is Large ribosomal subunit protein bL25 (Yersinia pestis bv. Antiqua (strain Antiqua)).